An 85-amino-acid polypeptide reads, in one-letter code: CRISPR-associated endoribonuclease Cas2 (85 aa).

Asp-8 contacts Mg(2+).

It belongs to the CRISPR-associated endoribonuclease Cas2 protein family. As to quaternary structure, homodimer, forms a heterotetramer with a Cas1 homodimer. Mg(2+) is required as a cofactor.

CRISPR (clustered regularly interspaced short palindromic repeat), is an adaptive immune system that provides protection against mobile genetic elements (viruses, transposable elements and conjugative plasmids). CRISPR clusters contain sequences complementary to antecedent mobile elements and target invading nucleic acids. CRISPR clusters are transcribed and processed into CRISPR RNA (crRNA). Functions as a ssRNA-specific endoribonuclease. Involved in the integration of spacer DNA into the CRISPR cassette. This Pyrococcus furiosus (strain ATCC 43587 / DSM 3638 / JCM 8422 / Vc1) protein is CRISPR-associated endoribonuclease Cas2.